Reading from the N-terminus, the 279-residue chain is MSKRLKILLTNDDGISAKGMSLLVSNLLKADFADLYVVAPSTEQSGKSMSFSYTQPVSIESVDYPQEVAGAWAVSGSPVDCVKLALGDLFYDSFPDLVLSGINHGSNAGRNIFYSGTAGAAMEAILSGVPSIAFSQEQHISFFQTDSAPELLRKLSFYALSNPFPVVTGFNVNFPASERNEPWKGMRLVATGKEFACGLPKLLSSDGKRKSFSLSDCQVVMDEDISEECRCLLDNYITVVPLLVRNSPLALTSESEFQQLQETFQEFMCSEADTRLFDV.

Residues D12, D13, S45, and N103 each coordinate a divalent metal cation.

Belongs to the SurE nucleotidase family. A divalent metal cation is required as a cofactor.

The protein localises to the cytoplasm. The catalysed reaction is a ribonucleoside 5'-phosphate + H2O = a ribonucleoside + phosphate. Its function is as follows. Nucleotidase that shows phosphatase activity on nucleoside 5'-monophosphates. The sequence is that of 5'-nucleotidase SurE 1 from Chlamydia caviae (strain ATCC VR-813 / DSM 19441 / 03DC25 / GPIC) (Chlamydophila caviae).